The sequence spans 692 residues: Elongation factor G (692 aa).

Residues 8-282 (EKTRNIGIMA…GVVDYLPSPV (275 aa)) enclose the tr-type G domain. GTP is bound by residues 17–24 (AHIDAGKT), 81–85 (DTPGH), and 135–138 (NKMD).

Belongs to the TRAFAC class translation factor GTPase superfamily. Classic translation factor GTPase family. EF-G/EF-2 subfamily.

Its subcellular location is the cytoplasm. Functionally, catalyzes the GTP-dependent ribosomal translocation step during translation elongation. During this step, the ribosome changes from the pre-translocational (PRE) to the post-translocational (POST) state as the newly formed A-site-bound peptidyl-tRNA and P-site-bound deacylated tRNA move to the P and E sites, respectively. Catalyzes the coordinated movement of the two tRNA molecules, the mRNA and conformational changes in the ribosome. The chain is Elongation factor G from Geobacillus kaustophilus (strain HTA426).